The primary structure comprises 709 residues: Phosphoribosylformylglycinamidine synthase subunit PurL (709 aa).

Residue His36 is part of the active site. The ATP site is built by Tyr39 and Lys80. A Mg(2+)-binding site is contributed by Glu82. Substrate contacts are provided by residues 83–86 (SHNH) and Arg105. The active-site Proton acceptor is His84. Residue Asp106 participates in Mg(2+) binding. Gln226 lines the substrate pocket. Residue Asp252 coordinates Mg(2+). Substrate is bound at residue 294-296 (ETQ). ATP-binding residues include Asp470 and Gly507. Residue Ser510 participates in substrate binding.

This sequence belongs to the FGAMS family. In terms of assembly, monomer. Part of the FGAM synthase complex composed of 1 PurL, 1 PurQ and 2 PurS subunits.

Its subcellular location is the cytoplasm. The catalysed reaction is N(2)-formyl-N(1)-(5-phospho-beta-D-ribosyl)glycinamide + L-glutamine + ATP + H2O = 2-formamido-N(1)-(5-O-phospho-beta-D-ribosyl)acetamidine + L-glutamate + ADP + phosphate + H(+). It participates in purine metabolism; IMP biosynthesis via de novo pathway; 5-amino-1-(5-phospho-D-ribosyl)imidazole from N(2)-formyl-N(1)-(5-phospho-D-ribosyl)glycinamide: step 1/2. In terms of biological role, part of the phosphoribosylformylglycinamidine synthase complex involved in the purines biosynthetic pathway. Catalyzes the ATP-dependent conversion of formylglycinamide ribonucleotide (FGAR) and glutamine to yield formylglycinamidine ribonucleotide (FGAM) and glutamate. The FGAM synthase complex is composed of three subunits. PurQ produces an ammonia molecule by converting glutamine to glutamate. PurL transfers the ammonia molecule to FGAR to form FGAM in an ATP-dependent manner. PurS interacts with PurQ and PurL and is thought to assist in the transfer of the ammonia molecule from PurQ to PurL. This chain is Phosphoribosylformylglycinamidine synthase subunit PurL, found in Saccharolobus solfataricus (strain ATCC 35092 / DSM 1617 / JCM 11322 / P2) (Sulfolobus solfataricus).